The primary structure comprises 90 residues: Small ribosomal subunit protein uS17m (90 aa).

This sequence belongs to the universal ribosomal protein uS17 family. In terms of assembly, component of the mitochondrial small ribosomal subunit (mt-SSU). Mature yeast 74S mitochondrial ribosomes consist of a small (37S) and a large (54S) subunit. The 37S small subunit contains a 15S ribosomal RNA (15S mt-rRNA) and at least 32 different proteins. The 54S large subunit contains a 21S rRNA (21S mt-rRNA) and at least 45 different proteins.

It localises to the mitochondrion. In terms of biological role, component of the mitochondrial ribosome (mitoribosome), a dedicated translation machinery responsible for the synthesis of mitochondrial genome-encoded proteins, including at least some of the essential transmembrane subunits of the mitochondrial respiratory chain. The mitoribosomes are attached to the mitochondrial inner membrane and translation products are cotranslationally integrated into the membrane. uS17m may have a meiosis-specific role as it accumulates during the middle stage of sporulation. This Schizosaccharomyces pombe (strain 972 / ATCC 24843) (Fission yeast) protein is Small ribosomal subunit protein uS17m.